A 161-amino-acid polypeptide reads, in one-letter code: SsrA-binding protein (161 aa).

This sequence belongs to the SmpB family.

The protein localises to the cytoplasm. In terms of biological role, required for rescue of stalled ribosomes mediated by trans-translation. Binds to transfer-messenger RNA (tmRNA), required for stable association of tmRNA with ribosomes. tmRNA and SmpB together mimic tRNA shape, replacing the anticodon stem-loop with SmpB. tmRNA is encoded by the ssrA gene; the 2 termini fold to resemble tRNA(Ala) and it encodes a 'tag peptide', a short internal open reading frame. During trans-translation Ala-aminoacylated tmRNA acts like a tRNA, entering the A-site of stalled ribosomes, displacing the stalled mRNA. The ribosome then switches to translate the ORF on the tmRNA; the nascent peptide is terminated with the 'tag peptide' encoded by the tmRNA and targeted for degradation. The ribosome is freed to recommence translation, which seems to be the essential function of trans-translation. This Psychromonas ingrahamii (strain DSM 17664 / CCUG 51855 / 37) protein is SsrA-binding protein.